A 203-amino-acid polypeptide reads, in one-letter code: Outer-membrane lipoprotein carrier protein (203 aa).

A signal peptide spans 1 to 21; the sequence is MKKMAIACALLSSVVASSVWA. Residues 178–203 form a disordered region; the sequence is QQNGAVDPSKFTFTPPQGVTIDDQRK.

This sequence belongs to the LolA family. Monomer.

The protein resides in the periplasm. In terms of biological role, participates in the translocation of lipoproteins from the inner membrane to the outer membrane. Only forms a complex with a lipoprotein if the residue after the N-terminal Cys is not an aspartate (The Asp acts as a targeting signal to indicate that the lipoprotein should stay in the inner membrane). The protein is Outer-membrane lipoprotein carrier protein of Salmonella paratyphi A (strain ATCC 9150 / SARB42).